The chain runs to 444 residues: Chromosomal replication initiator protein DnaA (444 aa).

Residues 1-66 (MKSEIIESLK…SKTLRELFGK (66 aa)) are domain I, interacts with DnaA modulators. The interval 66–100 (KPMDFRIEHASAKTEEKLDSNEDEPLVKKRPLILT) is domain II. Positions 101–317 (PLNPILTFEN…GALVKLIMYQ (217 aa)) are domain III, AAA+ region. ATP-binding residues include glycine 144, glycine 146, lysine 147, and threonine 148. Positions 318-444 (QISGEKVDLQ…VTGQILDQSV (127 aa)) are domain IV, binds dsDNA.

Belongs to the DnaA family. In terms of assembly, oligomerizes as a right-handed, spiral filament on DNA at oriC.

It localises to the cytoplasm. Functionally, plays an essential role in the initiation and regulation of chromosomal replication. ATP-DnaA binds to the origin of replication (oriC) to initiate formation of the DNA replication initiation complex once per cell cycle. Binds the DnaA box (a 9 base pair repeat at the origin) and separates the double-stranded (ds)DNA. Forms a right-handed helical filament on oriC DNA; dsDNA binds to the exterior of the filament while single-stranded (ss)DNA is stabiized in the filament's interior. The ATP-DnaA-oriC complex binds and stabilizes one strand of the AT-rich DNA unwinding element (DUE), permitting loading of DNA polymerase. After initiation quickly degrades to an ADP-DnaA complex that is not apt for DNA replication. Binds acidic phospholipids. The sequence is that of Chromosomal replication initiator protein DnaA from Pseudothermotoga lettingae (strain ATCC BAA-301 / DSM 14385 / NBRC 107922 / TMO) (Thermotoga lettingae).